The following is a 296-amino-acid chain: HVA22-like protein i (296 aa).

The segment at 146-296 (STPRPQPPQK…LRKTRSEESR (151 aa)) is disordered. A compositionally biased stretch (low complexity) spans 180 to 193 (VSLSSSSSSSSSEN). Polar residues predominate over residues 223–233 (AGTTQIAQKSV). A compositionally biased stretch (acidic residues) spans 251–261 (QIEEVEGEAES). Over residues 270 to 281 (GPKETVMEETIR) the composition is skewed to basic and acidic residues.

This sequence belongs to the DP1 family.

This chain is HVA22-like protein i (HVA22I), found in Arabidopsis thaliana (Mouse-ear cress).